The following is a 318-amino-acid chain: Protein W (318 aa).

Disordered regions lie at residues Met-1–Glu-23 and Ile-54–Ala-318. Composition is skewed to basic and acidic residues over residues Ile-7–Gly-20, Ala-99–Asn-110, Gly-150–Asp-168, and Glu-175–Asn-193. A phosphoserine; by host mark is found at Ser-249, Ser-257, and Ser-260.

This Sendai virus (strain Ohita) (SeV) protein is Protein W (P/V/C).